Consider the following 236-residue polypeptide: 7-cyano-7-deazaguanine synthase (236 aa).

Residue 7–17 participates in ATP binding; that stretch reads CSGGLDSVSLA. Positions 185, 193, 196, and 199 each coordinate Zn(2+).

This sequence belongs to the QueC family. Zn(2+) is required as a cofactor.

The catalysed reaction is 7-carboxy-7-deazaguanine + NH4(+) + ATP = 7-cyano-7-deazaguanine + ADP + phosphate + H2O + H(+). It participates in purine metabolism; 7-cyano-7-deazaguanine biosynthesis. Functionally, catalyzes the ATP-dependent conversion of 7-carboxy-7-deazaguanine (CDG) to 7-cyano-7-deazaguanine (preQ(0)). This is 7-cyano-7-deazaguanine synthase from Rhizobium etli (strain CIAT 652).